Here is a 467-residue protein sequence, read N- to C-terminus: L-histidine transporter HutT (467 aa).

The next 13 helical transmembrane spans lie at 18–38 (FMAL…SAIQ), 39–59 (MAGP…FMVM), 71–91 (VAGS…GFIL), 99–119 (MVIV…FWFP), 125–145 (IWVL…VKVF), 155–175 (LKVG…AFGF), 200–220 (VGGL…IEII), 245–265 (ILLF…WPQI), 280–300 (GIGS…ISAI), 334–354 (WMTV…NYLI), 358–378 (VFLL…LMIL), 402–422 (FWPY…GVLG), and 429–449 (AALI…LLWC).

Belongs to the amino acid-polyamine-organocation (APC) superfamily. Amino acid transporter (AAT) (TC 2.A.3.1) family.

The protein resides in the cell inner membrane. The enzyme catalyses L-histidine(out) + n H(+)(out) = L-histidine(in) + n H(+)(in). Its activity is regulated as follows. Transport activity is inhibited by the proton ionophores carbonyl cyanide m-chlorophenyl hydrazine (CCCP) and 2,4-dinitrophenol (DNP), but not by valinomycin, nigericin and nonactin. Uptake is reduced in the presence of the sulfhydryl reagent N-ethylmaleimide (NEM). Uptake is not affected by arginine, lysine, proline or compounds structurally related to histidine such as imidazole, 3-amino-1,2,4-triazole and urocanate. Only 1,2,4-triazolyl-3-alanine reduces the rate of L-histidine uptake significantly. Functionally, major high-affinity histidine transporter. Binds and catalyzes the uptake of histidine into the cell. Functions as an histidine:proton symporter with high specificity for histidine. This is L-histidine transporter HutT from Pseudomonas putida (strain ATCC 47054 / DSM 6125 / CFBP 8728 / NCIMB 11950 / KT2440).